We begin with the raw amino-acid sequence, 368 residues long: Probable leucine aminopeptidase TRV_05750 (368 aa).

An N-terminal signal peptide occupies residues 1-18 (MKVFAIAAVAALTAVAVA). N-linked (GlcNAc...) asparagine glycosylation is present at Asn92. The Zn(2+) site is built by His172 and Asp191. N-linked (GlcNAc...) asparagine glycosylation is found at Asn192 and Asn216. Zn(2+)-binding residues include Glu230 and Asp257. A disulfide bridge connects residues Cys301 and Cys305. Zn(2+) is bound at residue His334.

It belongs to the peptidase M28 family. M28E subfamily. As to quaternary structure, monomer. Zn(2+) is required as a cofactor.

It is found in the secreted. In terms of biological role, probable extracellular aminopeptidase which contributes to pathogenicity. The polypeptide is Probable leucine aminopeptidase TRV_05750 (Trichophyton verrucosum (strain HKI 0517)).